Consider the following 211-residue polypeptide: Glycerol-3-phosphate acyltransferase (211 aa).

The next 5 membrane-spanning stretches (helical) occupy residues 5 to 25 (ALGMMLIAYLCGSVSSAILFC), 58 to 78 (VLVFDILKGMLPVWGAYALGV), 80 to 100 (PLYLGLTAIAACLGHIYPVFF), 112 to 132 (LGAIAPIGLDLTGLMTGTWLL), and 138 to 158 (GYSSLGAIVSALIAPFYVWWF).

The protein belongs to the PlsY family. In terms of assembly, probably interacts with PlsX.

The protein resides in the cell inner membrane. It catalyses the reaction an acyl phosphate + sn-glycerol 3-phosphate = a 1-acyl-sn-glycero-3-phosphate + phosphate. It functions in the pathway lipid metabolism; phospholipid metabolism. Its function is as follows. Catalyzes the transfer of an acyl group from acyl-phosphate (acyl-PO(4)) to glycerol-3-phosphate (G3P) to form lysophosphatidic acid (LPA). This enzyme utilizes acyl-phosphate as fatty acyl donor, but not acyl-CoA or acyl-ACP. This chain is Glycerol-3-phosphate acyltransferase, found in Pectobacterium atrosepticum (strain SCRI 1043 / ATCC BAA-672) (Erwinia carotovora subsp. atroseptica).